The chain runs to 352 residues: Hematopoietic SH2 domain-containing protein (352 aa).

One can recognise an SH2 domain in the interval 34-125 (WFHGAISRED…PRRELLTQPC (92 aa)). Disordered regions lie at residues 157 to 199 (EEAS…LGET) and 241 to 352 (VISG…PGYC). Over residues 180-191 (RITTKEATSSCP) the composition is skewed to polar residues. Over residues 283 to 295 (PKDRKVPTRKAER) the composition is skewed to basic and acidic residues. Residues 343 to 352 (QPPPFAPGYC) are compositionally biased toward pro residues.

In terms of assembly, interacts with FES and TNK2. May be phosphorylated by FES and ACK1. As to expression, predominantly expressed in spleen and hematopoietic cells such as peripheral blood leukocytes and weakly expressed in prostate, thymus, heart, small intestine and placenta.

Its subcellular location is the cytoplasm. It localises to the nucleus. May be a modulator of the apoptotic response through its ability to affect mitochondrial stability. Adapter protein involved in tyrosine kinase and CD28 signaling. Seems to affect CD28-mediated activation of the RE/AP element of the interleukin-2 promoter. This chain is Hematopoietic SH2 domain-containing protein (HSH2D), found in Homo sapiens (Human).